The primary structure comprises 1457 residues: ABC transporter G family member 36 (1457 aa).

The disordered stretch occupies residues 14–43 (RLGGSMRGDSGSMWRRGDDVFSRSSREEDD). Over residues 28-39 (RRGDDVFSRSSR) the composition is skewed to basic and acidic residues. Residues 164 to 437 (GNALGILPNR…FESMGFKCPD (274 aa)) form the ABC transporter 1 domain. 197-204 (GPPGSGKT) is a binding site for ATP. In terms of domain architecture, ABC transmembrane type-2 1 spans 515–728 (ELLKANIDRE…AQNAISVNEL (214 aa)). Transmembrane regions (helical) follow at residues 533–553 (FVYMFRTFQLMVVSLIAMTLF), 565–585 (SGGIYMGALFFGVLMIMFNGF), 621–641 (IPITFIEVGGYVFLTYYVIGF), 653–673 (LLMLAINQMAGSLFRFIGGAA), 677–697 (IVANVFASFMLLIFMVLGGFI), 706–726 (WWIWGYWISPMMYAQNAISVN), and 765–785 (IGFGAMIGFTILFNALFTLAL). Residues 821 to 841 (SSGSTRRPMGNGTENDSTIVD) form a disordered region. Residues 860 to 1112 (LSFDNVRYSV…ELIKYFESIP (253 aa)) form the ABC transporter 2 domain. 905–912 (GVSGAGKT) is a binding site for ATP. Residues 1185 to 1399 (TQCMACLWKQ…TLYGLVVSQF (215 aa)) form the ABC transmembrane type-2 2 domain. 7 helical membrane passes run 1209–1229 (FFFTTVIALLFGTIFWDLGGK), 1244–1264 (YAAVLFIGVMNCTSVQPVVAV), 1292–1312 (IPYTLVQATVYGIIVYAMIGF), 1319–1339 (FFWYLFFMVFTLLYFTFYGMM), 1349–1369 (IASIVSSAFYAIWNLFSGFVI), 1380–1400 (WYCWACPVAWTLYGLVVSQFG), and 1429–1449 (WVATVVAAFAFLFASLFGFAI).

Belongs to the ABC transporter superfamily. ABCG family. PDR (TC 3.A.1.205) subfamily.

Its subcellular location is the membrane. Its function is as follows. May be a general defense protein. This chain is ABC transporter G family member 36, found in Oryza sativa subsp. japonica (Rice).